Reading from the N-terminus, the 32-residue chain is Lectin (32 aa).

It belongs to the leguminous lectin family. As to quaternary structure, homotetramer.

Functionally, metalloglycoprotein, containing Ca, Mg, Mn, and Zn and the carbohydrates galactose, glucosamine, mannose, and fucose. It agglutinates erythrocytes of blood group A1. The chain is Lectin from Macrotyloma axillare (Perennial horse gram).